The following is a 379-amino-acid chain: 1-deoxy-D-xylulose 5-phosphate reductoisomerase (379 aa).

NADPH contacts are provided by T10, G11, S12, I13, N39, and N121. Residue K122 participates in 1-deoxy-D-xylulose 5-phosphate binding. Position 123 (E123) interacts with NADPH. D147 lines the Mn(2+) pocket. Residues S148, E149, S173, and H196 each contribute to the 1-deoxy-D-xylulose 5-phosphate site. E149 serves as a coordination point for Mn(2+). An NADPH-binding site is contributed by G202. 1-deoxy-D-xylulose 5-phosphate contacts are provided by S209, N214, K215, and E218. Residue E218 coordinates Mn(2+).

The protein belongs to the DXR family. The cofactor is Mg(2+). Mn(2+) is required as a cofactor.

The catalysed reaction is 2-C-methyl-D-erythritol 4-phosphate + NADP(+) = 1-deoxy-D-xylulose 5-phosphate + NADPH + H(+). It participates in isoprenoid biosynthesis; isopentenyl diphosphate biosynthesis via DXP pathway; isopentenyl diphosphate from 1-deoxy-D-xylulose 5-phosphate: step 1/6. In terms of biological role, catalyzes the NADPH-dependent rearrangement and reduction of 1-deoxy-D-xylulose-5-phosphate (DXP) to 2-C-methyl-D-erythritol 4-phosphate (MEP). The polypeptide is 1-deoxy-D-xylulose 5-phosphate reductoisomerase (Chlamydia pneumoniae (Chlamydophila pneumoniae)).